The following is a 174-amino-acid chain: Dual-action ribosomal maturation protein DarP (174 aa).

It belongs to the DarP family.

It localises to the cytoplasm. Its function is as follows. Member of a network of 50S ribosomal subunit biogenesis factors which assembles along the 30S-50S interface, preventing incorrect 23S rRNA structures from forming. Promotes peptidyl transferase center (PTC) maturation. In Pseudomonas paraeruginosa (strain DSM 24068 / PA7) (Pseudomonas aeruginosa (strain PA7)), this protein is Dual-action ribosomal maturation protein DarP.